We begin with the raw amino-acid sequence, 143 residues long: Small ribosomal subunit protein uS12 (143 aa).

Over residues 1 to 19 (MGKPKGIRAARKLKTHRQA) the composition is skewed to basic residues. The disordered stretch occupies residues 1–21 (MGKPKGIRAARKLKTHRQAQR). At Pro-62 the chain carries Hydroxyproline.

The protein belongs to the universal ribosomal protein uS12 family. Component of the 40S small ribosomal subunit.

It localises to the cytoplasm. The protein resides in the cytosol. The protein localises to the rough endoplasmic reticulum. This chain is Small ribosomal subunit protein uS12 (rps-23), found in Brugia malayi (Filarial nematode worm).